Here is a 270-residue protein sequence, read N- to C-terminus: Putative pyruvate, phosphate dikinase regulatory protein (270 aa).

149–156 (GVSRTSKT) contributes to the ADP binding site.

The protein belongs to the pyruvate, phosphate/water dikinase regulatory protein family. PDRP subfamily.

It catalyses the reaction N(tele)-phospho-L-histidyl/L-threonyl-[pyruvate, phosphate dikinase] + ADP = N(tele)-phospho-L-histidyl/O-phospho-L-threonyl-[pyruvate, phosphate dikinase] + AMP + H(+). It carries out the reaction N(tele)-phospho-L-histidyl/O-phospho-L-threonyl-[pyruvate, phosphate dikinase] + phosphate + H(+) = N(tele)-phospho-L-histidyl/L-threonyl-[pyruvate, phosphate dikinase] + diphosphate. Its function is as follows. Bifunctional serine/threonine kinase and phosphorylase involved in the regulation of the pyruvate, phosphate dikinase (PPDK) by catalyzing its phosphorylation/dephosphorylation. This chain is Putative pyruvate, phosphate dikinase regulatory protein, found in Sphingopyxis alaskensis (strain DSM 13593 / LMG 18877 / RB2256) (Sphingomonas alaskensis).